The chain runs to 426 residues: Gamma-glutamyl phosphate reductase (426 aa).

It belongs to the gamma-glutamyl phosphate reductase family.

The protein resides in the cytoplasm. The enzyme catalyses L-glutamate 5-semialdehyde + phosphate + NADP(+) = L-glutamyl 5-phosphate + NADPH + H(+). It participates in amino-acid biosynthesis; L-proline biosynthesis; L-glutamate 5-semialdehyde from L-glutamate: step 2/2. Catalyzes the NADPH-dependent reduction of L-glutamate 5-phosphate into L-glutamate 5-semialdehyde and phosphate. The product spontaneously undergoes cyclization to form 1-pyrroline-5-carboxylate. The chain is Gamma-glutamyl phosphate reductase from Nitrobacter winogradskyi (strain ATCC 25391 / DSM 10237 / CIP 104748 / NCIMB 11846 / Nb-255).